Reading from the N-terminus, the 1435-residue chain is Protein clueless (1435 aa).

The disordered stretch occupies residues 1-97 (MALEMDSKNS…KPEGDGDADA (97 aa)). The segment covering 18–35 (AAAATTKTNKAKENNNLA) has biased composition (low complexity). The segment covering 38 to 50 (KKNQSQNLVNGNG) has biased composition (polar residues). The span at 58–67 (TKKKGKKNRN) shows a compositional bias: basic residues. Serine 266 is modified (phosphoserine). The 243-residue stretch at 420 to 662 (RAEDAFSSKL…RTFPPDVNFL (243 aa)) folds into the Clu domain. Basic and acidic residues-rich tracts occupy residues 719-731 (KKPE…EKKQ) and 752-762 (PNEKEKDTPVE). 2 disordered regions span residues 719–762 (KKPE…TPVE) and 952–998 (VSND…SSSS). Basic residues predominate over residues 959 to 975 (KKRGGNGGKHNKHKSSK). The segment covering 988–998 (NGGSTTSSSSS) has biased composition (low complexity). 3 TPR repeats span residues 1096 to 1129 (AYNF…LNNV), 1222 to 1255 (ALID…NLKY), and 1257 to 1290 (GNKA…EKET). Positions 1407 to 1435 (EVLAPQDNNKEQAATAQQLTNGDKVAVSS) are disordered. Polar residues predominate over residues 1417 to 1435 (EQAATAQQLTNGDKVAVSS).

It belongs to the CLU family.

It is found in the cytoplasm. In terms of biological role, mRNA-binding protein involved in proper cytoplasmic distribution of mitochondria. In Drosophila persimilis (Fruit fly), this protein is Protein clueless.